Reading from the N-terminus, the 681-residue chain is Amine oxidase [copper-containing] alpha 3, peroxisomal (681 aa).

323–334 is a binding site for substrate; the sequence is YLDCGDFGCGQC. D325 (proton acceptor) is an active-site residue. C344 and C370 are disulfide-bonded. Residue 410 to 415 coordinates substrate; the sequence is VGNYDY. The Schiff-base intermediate with substrate; via topaquinone role is filled by Y413. The residue at position 413 (Y413) is a 2',4',5'-topaquinone. Cu cation-binding residues include H470 and H472. 3 residues coordinate Mn(2+): D481, D621, and I622. A Cu cation-binding site is contributed by H632.

It belongs to the copper/topaquinone oxidase family. Topaquinone (TPQ) is generated by copper-dependent autoxidation of a specific tyrosyl residue. Mostly expressed in stems, and, at lower levels, in flowers and leaves. Mainly detectable in stipules, hypocotyls and roots.

It localises to the peroxisome. It catalyses the reaction a primary methyl amine + O2 + H2O = an aldehyde + H2O2 + NH4(+). It participates in amine and polyamine degradation; putrescine degradation. Its function is as follows. Copper amine oxidase that can use putrescine and spermidine as substrates. Involved in putrescine catabolism in peroxisomes. This chain is Amine oxidase [copper-containing] alpha 3, peroxisomal, found in Arabidopsis thaliana (Mouse-ear cress).